The sequence spans 351 residues: Glycerol-1-phosphate dehydrogenase [NAD(P)+] (351 aa).

Residues Gly97–Asp101 and Thr119–Ser122 each bind NAD(+). Substrate is bound at residue Asp124. Ser128 is a binding site for NAD(+). Asp171 lines the substrate pocket. Residues Asp171 and His251 each contribute to the Zn(2+) site. Substrate is bound at residue His255. His267 lines the Zn(2+) pocket.

This sequence belongs to the glycerol-1-phosphate dehydrogenase family. Homodimer. The cofactor is Zn(2+).

It is found in the cytoplasm. It carries out the reaction sn-glycerol 1-phosphate + NAD(+) = dihydroxyacetone phosphate + NADH + H(+). The enzyme catalyses sn-glycerol 1-phosphate + NADP(+) = dihydroxyacetone phosphate + NADPH + H(+). It functions in the pathway membrane lipid metabolism; glycerophospholipid metabolism. Functionally, catalyzes the NAD(P)H-dependent reduction of dihydroxyacetonephosphate (DHAP or glycerone phosphate) to glycerol 1-phosphate (G1P). The G1P thus generated is used as the glycerophosphate backbone of phospholipids in the cellular membranes of Archaea. In Saccharolobus islandicus (strain M.16.27) (Sulfolobus islandicus), this protein is Glycerol-1-phosphate dehydrogenase [NAD(P)+].